A 482-amino-acid polypeptide reads, in one-letter code: UDP-N-acetylmuramate--L-alanine ligase (482 aa).

ATP is bound at residue 123–129 (GTHGKTT).

It belongs to the MurCDEF family.

The protein resides in the cytoplasm. It catalyses the reaction UDP-N-acetyl-alpha-D-muramate + L-alanine + ATP = UDP-N-acetyl-alpha-D-muramoyl-L-alanine + ADP + phosphate + H(+). The protein operates within cell wall biogenesis; peptidoglycan biosynthesis. Functionally, cell wall formation. The polypeptide is UDP-N-acetylmuramate--L-alanine ligase (Pseudomonas putida (strain W619)).